The chain runs to 322 residues: Aspartate carbamoyltransferase catalytic subunit (322 aa).

The carbamoyl phosphate site is built by Arg-65 and Thr-66. Residue Lys-93 participates in L-aspartate binding. Residues Arg-115, His-143, and Gln-146 each contribute to the carbamoyl phosphate site. Arg-176 and Arg-230 together coordinate L-aspartate. Positions 271 and 272 each coordinate carbamoyl phosphate.

The protein belongs to the aspartate/ornithine carbamoyltransferase superfamily. ATCase family. In terms of assembly, heterododecamer (2C3:3R2) of six catalytic PyrB chains organized as two trimers (C3), and six regulatory PyrI chains organized as three dimers (R2).

It carries out the reaction carbamoyl phosphate + L-aspartate = N-carbamoyl-L-aspartate + phosphate + H(+). It functions in the pathway pyrimidine metabolism; UMP biosynthesis via de novo pathway; (S)-dihydroorotate from bicarbonate: step 2/3. Catalyzes the condensation of carbamoyl phosphate and aspartate to form carbamoyl aspartate and inorganic phosphate, the committed step in the de novo pyrimidine nucleotide biosynthesis pathway. The polypeptide is Aspartate carbamoyltransferase catalytic subunit (Brucella abortus (strain S19)).